Reading from the N-terminus, the 130-residue chain is Con-Ins G2b (130 aa).

A signal peptide spans 1 to 23 (MTTSSYFLLVALGLLLYVRQSFS). Cystine bridges form between Cys29/Cys100, Cys41/Cys103, Cys53/Cys116, and Cys102/Cys107. Pro34 carries the post-translational modification 4-hydroxyproline; partial. The segment at 54–77 (EEEEARRGGTNDGGKKRRRASPLR) is disordered. The propeptide at 59–92 (RRGGTNDGGKKRRRASPLRKRRRFISMLKARAKR) is c peptide. Over residues 68–77 (KKRRRASPLR) the composition is skewed to basic residues. Residue Glu111 is modified to 4-carboxyglutamate; partial.

It belongs to the insulin family. Heterodimer of A and B chains; disulfide-linked. In terms of tissue distribution, expressed by the venom gland.

It localises to the secreted. This venom insulin, from a fish-hunting cone snail, facilitates prey capture by rapidly inducing hypoglycemic shock. Intraperitoneal injection of this peptide into zebrafish lowers blood glucose with the same potency than human insulin. In vivo, when applied to water, this peptide reduces overall locomotor activity of zebrafish larvae, observed as a significant decrease in the percentage of time spent swimming and movement frequency. This chain is Con-Ins G2b, found in Conus geographus (Geography cone).